Consider the following 40-residue polypeptide: Sarcotoxin-1D (40 aa).

This sequence belongs to the cecropin family.

The protein resides in the secreted. In terms of biological role, sarcotoxins, which are potent bactericidal proteins, are produced in response to injury. They are cytotoxic to both Gram-positive and Gram-negative bacteria. This Sarcophaga peregrina (Flesh fly) protein is Sarcotoxin-1D.